Here is a 110-residue protein sequence, read N- to C-terminus: MEVLAKHRFARTSPQKCRLVADQIRGLPVAKALEILTFSPKKAAVLVKKVLDSAIANAEHNEGADIDELRVGAIMIDEGPTMKRIMPRAKGRADRIIKRTSHITVVVSDR.

This sequence belongs to the universal ribosomal protein uL22 family. Part of the 50S ribosomal subunit.

This protein binds specifically to 23S rRNA; its binding is stimulated by other ribosomal proteins, e.g. L4, L17, and L20. It is important during the early stages of 50S assembly. It makes multiple contacts with different domains of the 23S rRNA in the assembled 50S subunit and ribosome. In terms of biological role, the globular domain of the protein is located near the polypeptide exit tunnel on the outside of the subunit, while an extended beta-hairpin is found that lines the wall of the exit tunnel in the center of the 70S ribosome. This chain is Large ribosomal subunit protein uL22, found in Shewanella halifaxensis (strain HAW-EB4).